The chain runs to 431 residues: Phosphoribosylamine--glycine ligase (431 aa).

The ATP-grasp domain occupies 107-315 (RWLMEEYKIP…LVEIGEEIVD (209 aa)). 134–193 (IDDFGRPVVVKPLGLTGGKGVKVVGYQLKDNEEAKAYAEELIKRDGKVLIEERTDGVEFT) is a binding site for ATP. Residues Q273, E285, and N287 each contribute to the Mg(2+) site. Q273, E285, and N287 together coordinate Mn(2+).

Belongs to the GARS family. Requires Mg(2+) as cofactor. Mn(2+) is required as a cofactor.

The catalysed reaction is 5-phospho-beta-D-ribosylamine + glycine + ATP = N(1)-(5-phospho-beta-D-ribosyl)glycinamide + ADP + phosphate + H(+). Its pathway is purine metabolism; IMP biosynthesis via de novo pathway; N(1)-(5-phospho-D-ribosyl)glycinamide from 5-phospho-alpha-D-ribose 1-diphosphate: step 2/2. The chain is Phosphoribosylamine--glycine ligase from Thermococcus kodakarensis (strain ATCC BAA-918 / JCM 12380 / KOD1) (Pyrococcus kodakaraensis (strain KOD1)).